A 132-amino-acid chain; its full sequence is MIVRTTAEITDTERDITSEDGNWRSKRIILGGDKVGFSFHETTIKAGSVNEFHYANHVEAVWLVEGTGKLIDLDNDKVYELGPGSMYLLNGHERHRVEPETEMRMLCVFNPPVTGREVHDENGVYPLIEVPA.

The protein belongs to the ectoine synthase family.

It carries out the reaction (2S)-4-acetamido-2-aminobutanoate = L-ectoine + H2O. Its pathway is amine and polyamine biosynthesis; ectoine biosynthesis; L-ectoine from L-aspartate 4-semialdehyde: step 3/3. In terms of biological role, catalyzes the circularization of gamma-N-acetyl-alpha,gamma-diaminobutyric acid (ADABA) to ectoine (1,4,5,6-tetrahydro-2-methyl-4-pyrimidine carboxylic acid), which is an excellent osmoprotectant. This Rhodococcus opacus (strain B4) protein is L-ectoine synthase.